Reading from the N-terminus, the 884-residue chain is Blastomere cadherin (884 aa).

Positions 1–26 (MGGTDKFRYPSVWLCGLLCLLQVVPS) are cleaved as a signal peptide. Residues 27–157 (INVDVSGCQP…KHTGLKRKKR (131 aa)) constitute a propeptide that is removed on maturation. Cadherin domains lie at 158 to 265 (DWVI…RPKF), 266 to 378 (TQPV…APIF), 379 to 489 (DPKT…APVF), 490 to 595 (VPVV…DNGP), and 596 to 706 (VPSP…GFDL). Residues 158-706 (DWVIPPIKVS…QEKLVAGFDL (549 aa)) lie on the Extracellular side of the membrane. Asn427, Asn560, and Asn683 each carry an N-linked (GlcNAc...) asparagine glycan. Residues 707-730 (PIILVILGSILALLILSLLLLLFL) traverse the membrane as a helical segment. The Cytoplasmic segment spans residues 731–884 (KRKKVVKEPL…YGGDDDDDEE (154 aa)).

Expressed in pituitary gland, lung and kidney.

The protein localises to the cell membrane. Its function is as follows. Cadherins are calcium-dependent cell adhesion proteins. They preferentially interact with themselves in a homophilic manner in connecting cells; cadherins may thus contribute to the sorting of heterogeneous cell types. The chain is Blastomere cadherin from Xenopus laevis (African clawed frog).